Reading from the N-terminus, the 715-residue chain is MSTIVLILALLLTSLIAVGLLWWLRFRRPHPITAALPFVKLTHRKLTPEERVSIENYLRNQQNKHGFNTQPAFDSHALAASTSSTPMLVLTPQSDNVYSVTRAITRYGVASDEPNKWRYYLDSIEVHLPSAWEQYITQDNDVELIQTQTIPLVISLNGHTLNNHQSENTYQPILPSVSKNASIRKEDSEHIELLNIRKETPEEYALHGPNGLKEACAICIALLLLFFALSGPTVTLPWLVIVAVSLTCWACWYLFRPLSEKDLREVHCLNGTPKRWGLFGESNQGQINNISLGIVDLIYPAHWGPYFVHDLGKKTHIDIYLNRQVVRQGAFLSLHDEMKMFPLQRWGKNLTLIVGSLLVLVLLLIYVPLGLPLKLSVAWLQGAQSQQVTSVAALDKMPLRIGDMLKAQGNGMCYVPPNIQNTRGFVFTPFDCSGIYWNTASPLPQPESETIEKAAALVETINKQLHPQGSDASVNPKLATAIEKSGMILLDDFSDIVLKTQALCSENTDCIRLKNALVNLGNAKNWSALVKRAQSGNLEGMNVLLRPISADVLENLINTAASSFVYRETHLATEALNSPPPGGFLITSDEGKQLVNHPAPTLPLFDYSALEQWRELQRLSALLLDTPFKAEGIITNITTDANGTRHIALHSEPDIVTLGRYLATSLLLLVLIFCLVVNMVLLIQRAMKNRRRMDNIQRYYDDCFNQTLTPPPFLR.

5 helical membrane passes run 2–22 (STIV…GLLW), 214–234 (EACA…GPTV), 235–255 (TLPW…WYLF), 349–369 (NLTL…YVPL), and 663–683 (ATSL…VLLI).

The protein belongs to the IgaA family.

It is found in the cell inner membrane. The polypeptide is Putative membrane protein IgaA homolog (Yersinia pestis).